The following is a 760-amino-acid chain: Elongation factor G, mitochondrial (760 aa).

A mitochondrion-targeting transit peptide spans 1–37; sequence MIRGMLPRGLRALRPSVSPTVVSSSLHRNFHSSIRRF. A tr-type G domain is found at 68–349; the sequence is SRLRNIGVSA…AVVDYLPQPN (282 aa). GTP is bound by residues 77-84, 148-152, and 202-205; these read AHIDSGKT, DTPGH, and NKMD.

The protein belongs to the TRAFAC class translation factor GTPase superfamily. Classic translation factor GTPase family. EF-G/EF-2 subfamily.

Its subcellular location is the mitochondrion. It participates in protein biosynthesis; polypeptide chain elongation. Its function is as follows. Mitochondrial GTPase that catalyzes the GTP-dependent ribosomal translocation step during translation elongation. During this step, the ribosome changes from the pre-translocational (PRE) to the post-translocational (POST) state as the newly formed A-site-bound peptidyl-tRNA and P-site-bound deacylated tRNA move to the P and E sites, respectively. Catalyzes the coordinated movement of the two tRNA molecules, the mRNA and conformational changes in the ribosome. The chain is Elongation factor G, mitochondrial from Meyerozyma guilliermondii (strain ATCC 6260 / CBS 566 / DSM 6381 / JCM 1539 / NBRC 10279 / NRRL Y-324) (Yeast).